Consider the following 126-residue polypeptide: MPTINQLVRKGREKVAVKSSAPALKGCPQKRGVCTRVYTTTPKKPNSALRKVARVRLTNGIEVTAYIGGIGHNLQEHSVVLVRGGRVKDLPGVRYHIVRGALDCAGVQNRNQGRSKYGTKRPKAKK.

Asp-89 is subject to 3-methylthioaspartic acid.

The protein belongs to the universal ribosomal protein uS12 family. As to quaternary structure, part of the 30S ribosomal subunit. Contacts proteins S8 and S17. May interact with IF1 in the 30S initiation complex.

With S4 and S5 plays an important role in translational accuracy. Its function is as follows. Interacts with and stabilizes bases of the 16S rRNA that are involved in tRNA selection in the A site and with the mRNA backbone. Located at the interface of the 30S and 50S subunits, it traverses the body of the 30S subunit contacting proteins on the other side and probably holding the rRNA structure together. The combined cluster of proteins S8, S12 and S17 appears to hold together the shoulder and platform of the 30S subunit. In Carboxydothermus hydrogenoformans (strain ATCC BAA-161 / DSM 6008 / Z-2901), this protein is Small ribosomal subunit protein uS12.